Reading from the N-terminus, the 418-residue chain is Secreted aspartic protease 5 (418 aa).

The N-terminal stretch at 1-18 is a signal peptide; the sequence is MFLKNILSVLAFALLIDA. Residues 19–76 constitute a propeptide, activation peptide; it reads APVKRSPGFVTLDFNVKRSLVDPDDPTVEAKRSPLFLEFTPSEFPVDETGRDGDVDKR. Positions 90–404 constitute a Peptidase A1 domain; that stretch reads YTADITVGSD…NLDDKKISMA (315 aa). The active site involves Asp108. 108 to 110 is a pepstatin A binding site; the sequence is DTG. Cysteines 123 and 135 form a disulfide. 161-162 contacts pepstatin A; it reads GD. Glu268 is a Zn(2+) binding site. Asp294 is a catalytic residue. 294–298 is a pepstatin A binding site; sequence DSGTT. The cysteines at positions 332 and 370 are disulfide-linked.

This sequence belongs to the peptidase A1 family.

It is found in the secreted. The enzyme catalyses Preferential cleavage at the carboxyl of hydrophobic amino acids, but fails to cleave 15-Leu-|-Tyr-16, 16-Tyr-|-Leu-17 and 24-Phe-|-Phe-25 of insulin B chain. Activates trypsinogen, and degrades keratin.. With respect to regulation, inhibited by pepstatin A analogs. Secreted aspartic peptidases (SAPs) are a group of ten acidic hydrolases considered as key virulence factors. These enzymes supply the fungus with nutrient amino acids as well as are able to degrade the selected host's proteins involved in the immune defense. Moreover, acts toward human hemoglobin though limited proteolysis to generate a variety of antimicrobial hemocidins, enabling to compete with the other microorganisms of the same physiological niche using the microbicidal peptides generated from the host protein. The sequence is that of Secreted aspartic protease 5 from Candida albicans (strain SC5314 / ATCC MYA-2876) (Yeast).